We begin with the raw amino-acid sequence, 280 residues long: MKFKEVRNTIKKMNITDIKICGINEYFMSMKLLDVEVVIMRSNGFVNITRLCNLEGKDFNDWKQLESSRRLLNTLKDNNKLHDPIINIRHTRIKINGEYVSQLLLDYVIPWISPYVATRVSILMRYYRRCVALNIETEKDIDHSQELQNQISKIDEVYDRSIKDISNRFKEIETSYYSKLSTYLLTKAERVLEKDYSMEQDIDNNEDIRTDEMIAAIEAEIEENNRRYLSIISGIRKQHAEDRINISKIMLSGDSFNEIIVKIRDYIETTAKPAVANNYE.

In terms of domain architecture, KilA-N spans 26 to 127 (YFMSMKLLDV…TRVSILMRYY (102 aa)).

This is an uncharacterized protein from Vertebrata (FPV).